Reading from the N-terminus, the 143-residue chain is Large ribosomal subunit protein uL11 (143 aa).

It belongs to the universal ribosomal protein uL11 family. As to quaternary structure, part of the ribosomal stalk of the 50S ribosomal subunit. Interacts with L10 and the large rRNA to form the base of the stalk. L10 forms an elongated spine to which L12 dimers bind in a sequential fashion forming a multimeric L10(L12)X complex. One or more lysine residues are methylated.

Forms part of the ribosomal stalk which helps the ribosome interact with GTP-bound translation factors. This Rhizobium etli (strain CIAT 652) protein is Large ribosomal subunit protein uL11.